The following is a 298-amino-acid chain: N-acetylmuramic acid 6-phosphate etherase (298 aa).

The SIS domain maps to 55–218; that stretch reads IHAQVSGGGR…STGLMIKSGK (164 aa). Catalysis depends on Glu83, which acts as the Proton donor. Glu114 is a catalytic residue.

It belongs to the GCKR-like family. MurNAc-6-P etherase subfamily. As to quaternary structure, homodimer.

It catalyses the reaction N-acetyl-D-muramate 6-phosphate + H2O = N-acetyl-D-glucosamine 6-phosphate + (R)-lactate. It functions in the pathway amino-sugar metabolism; N-acetylmuramate degradation. The protein operates within amino-sugar metabolism; 1,6-anhydro-N-acetylmuramate degradation. It participates in cell wall biogenesis; peptidoglycan recycling. Functionally, specifically catalyzes the cleavage of the D-lactyl ether substituent of MurNAc 6-phosphate, producing GlcNAc 6-phosphate and D-lactate. Together with AnmK, is also required for the utilization of anhydro-N-acetylmuramic acid (anhMurNAc) either imported from the medium or derived from its own cell wall murein, and thus plays a role in cell wall recycling. In Escherichia coli (strain K12 / MC4100 / BW2952), this protein is N-acetylmuramic acid 6-phosphate etherase.